Consider the following 427-residue polypeptide: 3-phosphoshikimate 1-carboxyvinyltransferase (427 aa).

3 residues coordinate 3-phosphoshikimate: lysine 22, serine 23, and arginine 27. Lysine 22 provides a ligand contact to phosphoenolpyruvate. Phosphoenolpyruvate-binding residues include glycine 96 and arginine 124. 3-phosphoshikimate-binding residues include serine 169, serine 170, glutamine 171, serine 197, aspartate 313, asparagine 336, and lysine 340. Residue glutamine 171 participates in phosphoenolpyruvate binding. Aspartate 313 functions as the Proton acceptor in the catalytic mechanism. Arginine 344, arginine 386, and lysine 411 together coordinate phosphoenolpyruvate.

It belongs to the EPSP synthase family. In terms of assembly, monomer.

The protein localises to the cytoplasm. The catalysed reaction is 3-phosphoshikimate + phosphoenolpyruvate = 5-O-(1-carboxyvinyl)-3-phosphoshikimate + phosphate. It participates in metabolic intermediate biosynthesis; chorismate biosynthesis; chorismate from D-erythrose 4-phosphate and phosphoenolpyruvate: step 6/7. Its function is as follows. Catalyzes the transfer of the enolpyruvyl moiety of phosphoenolpyruvate (PEP) to the 5-hydroxyl of shikimate-3-phosphate (S3P) to produce enolpyruvyl shikimate-3-phosphate and inorganic phosphate. In Salmonella arizonae (strain ATCC BAA-731 / CDC346-86 / RSK2980), this protein is 3-phosphoshikimate 1-carboxyvinyltransferase.